The chain runs to 152 residues: uncharacterized protein (152 aa).

3 helical membrane-spanning segments follow: residues 13 to 33 (LLWF…LLFF), 38 to 58 (LIVE…SLFM), and 69 to 89 (WVIF…FFVI).

The protein resides in the cell membrane. This is an uncharacterized protein from Mycoplasma pneumoniae (strain ATCC 29342 / M129 / Subtype 1) (Mycoplasmoides pneumoniae).